A 762-amino-acid polypeptide reads, in one-letter code: Anhydrosialidase (762 aa).

Positions 1-27 are cleaved as a signal peptide; it reads MGRIGKKAMAIALVSAVMVTPLNVCAT. Residue Arg293 coordinates substrate. Asp318 serves as the catalytic Proton acceptor. BNR repeat units lie at residues 328–339, 511–522, and 571–582; these read AKSTDGGNTWSE, RYSDDEGASWSD, and MYSDDHGDNWTY. The active site involves Glu595. Position 611 (Arg611) interacts with substrate. The BNR 4 repeat unit spans residues 620-631; it reads VTSIDGGETWSD. Arg673 is a substrate binding site. Residue Tyr713 is the Nucleophile of the active site.

This sequence belongs to the glycosyl hydrolase 33 family.

It localises to the secreted. Its subcellular location is the extracellular space. The enzyme catalyses Elimination of alpha-sialyl groups in N-acetylneuraminic acid glycosides, releasing 2,7-anhydro-alpha-N-acetylneuraminate.. The sequence is that of Anhydrosialidase from Macrobdella decora (North American leech).